The chain runs to 633 residues: Extracellular metalloproteinase 3 (633 aa).

An N-terminal signal peptide occupies residues M1–A18. Residues H19–S246 constitute a propeptide that is removed on maturation. N410 is a glycosylation site (N-linked (GlcNAc...) asparagine). H429 contributes to the Zn(2+) binding site. E430 is a catalytic residue. H433 lines the Zn(2+) pocket. N480 and N622 each carry an N-linked (GlcNAc...) asparagine glycan.

Belongs to the peptidase M36 family. Zn(2+) serves as cofactor.

The protein resides in the secreted. Secreted metalloproteinase probably acting as a virulence factor. This is Extracellular metalloproteinase 3 (MEP3) from Arthroderma benhamiae (Trichophyton mentagrophytes).